The following is a 485-amino-acid chain: Retron Mx162 reverse transcriptase (485 aa).

The segment at 1–33 is disordered; it reads MTARLDPFVPAASPQAVPTPELTAPSSDAAAKR. The region spanning 167 to 407 is the Reverse transcriptase domain; sequence RWFAFHREVD…TRQRVTGLVV (241 aa). 3 residues coordinate Mg(2+): Asp250, Asp346, and Asp347.

It belongs to the bacterial reverse transcriptase family.

It catalyses the reaction DNA(n) + a 2'-deoxyribonucleoside 5'-triphosphate = DNA(n+1) + diphosphate. Its activity is regulated as follows. msDNA synthesis is inhibited by rifampicin and chloramphenicol. In terms of biological role, reverse transcriptase (RT) responsible for synthesis of msDNA-Mx162 (a branched molecule with RNA linked by a 2',5'-phosphodiester bond to ssDNA). The retron transcript serves as primer (from a conserved internal G residue) and template for the reaction, and codes for the RT. The retron is involved in antiviral defense. This Myxococcus xanthus protein is Retron Mx162 reverse transcriptase.